A 475-amino-acid polypeptide reads, in one-letter code: Peripherin (475 aa).

The segment at 1-42 (MPSSASMSHHHSSGLRSSISSTSYRRTFGPPPSLSPGAFSYS) is disordered. The head stretch occupies residues 1–103 (MPSSASMSHH…FLATRSNEKQ (103 aa)). Residues 14–26 (GLRSSISSTSYRR) are compositionally biased toward low complexity. Residue Y24 is modified to 3'-nitrotyrosine. S35 and S57 each carry phosphoserine. A Phosphoserine; by PKB/AKT1 modification is found at S66. The IF rod domain occupies 101 to 411 (EKQELQELND…KLLEGEESRI (311 aa)). The tract at residues 104–136 (ELQELNDRFANFIEKVRFLEQQNAALRGELSQA) is coil 1A. The tract at residues 137 to 147 (RGQEPARADQL) is linker 1. Residues 148-243 (CQQELRELRR…KLHEEELRDL (96 aa)) are coil 1B. The interval 244–266 (QVSVESQQVQQVEVEATVKPELT) is linker 2. The interval 267–409 (AALRDIRAQY…YRKLLEGEES (143 aa)) is coil 2. 3'-nitrotyrosine is present on Y383. Positions 410-475 (RISVPVHSFA…DLDKSSIHSY (66 aa)) are tail. The segment at 453–475 (EKVVTESQKEQHSDLDKSSIHSY) is disordered. At Y475 the chain carries Phosphotyrosine.

The protein belongs to the intermediate filament family. Forms homodimers (in vitro). Homopolymerizes into a filamentous network (in vitro). Forms heterodimers with NEFL, NEFM or NEFH (in vitro). Interacts with DST (via C-terminus). Interacts with RAB7A; the interaction is direct. Interacts with PRKCE (via phorbol-ester/DAG-type 2 domain). Phosphorylated; phosphorylation increases after nerve injury in regenerating neurons. Expressed in the sciatic nerve and at very low levels in the central nervous system (at protein level). Expressed in the spinal cord, in the sciatic nerve at the level of the dorsal root ganglion and in trigeminal nerves (at protein level). Expressed in the cranial nerves in the hindbrain, including the sensory and motor trigeminal neurons, the mesencephalic trigeminal neurons, the spinal trigeminal neurons, and in the facial nerve (at protein level). Expressed in the cerebellum, with expression in the inferior cerebellar peduncle and the lateral deep cerebellar nucleus (at protein level). Expressed in vestibulocochlear neurons, such as the anteroventral cochlear nucleus, the dorsal cochlear nucleus, the superficial granule cell layer and the granule cell lamina (at protein level). Expressed in glossopharyngeal, vagal and hypoglossal neurons (at protein level). Expressed in peripheral sensory neurons, in the dorsal root ganglia and the spinal cord, and to a lower extent in motor neurons. Expressed in the optic tract of the central nervous system, especially in the lateral geniculate nucleus and the superior colliculus. Expressed in neurons of the pineal stalk in the cortex. Expressed in the spinal trigeminal tract of the midbrain, in the medulla and in the medial cerebellar peduncle.

Its subcellular location is the cytoplasm. The protein resides in the cytoskeleton. It is found in the cell projection. It localises to the axon. The protein localises to the perikaryon. In terms of biological role, class-III neuronal intermediate filament protein. May form an independent structural network without the involvement of other neurofilaments or may cooperate with the neuronal intermediate filament proteins NEFL, NEFH, NEFM and INA to form filamentous networks. Assembly of the neuronal intermediate filaments may be regulated by RAB7A. Plays a role in the development of unmyelinated sensory neurons. May be involved in axon elongation and axon regeneration after injury. Inhibits neurite extension in type II spiral ganglion neurons in the cochlea. The polypeptide is Peripherin (Prph) (Mus musculus (Mouse)).